We begin with the raw amino-acid sequence, 367 residues long: Protein P39 (367 aa).

Coiled coils occupy residues 165–202 (REGE…SKQQ) and 235–308 (EMIE…SDRL).

In terms of biological role, might be involved in virion assembly and vector-mediated transmission of the virus. The sequence is that of Protein P39 from Peanut clump virus (isolate 87/TGTA2) (PCV).